A 253-amino-acid polypeptide reads, in one-letter code: Imidazole glycerol phosphate synthase subunit HisF (253 aa).

Catalysis depends on residues D11 and D130.

The protein belongs to the HisA/HisF family. Heterodimer of HisH and HisF.

The protein localises to the cytoplasm. It carries out the reaction 5-[(5-phospho-1-deoxy-D-ribulos-1-ylimino)methylamino]-1-(5-phospho-beta-D-ribosyl)imidazole-4-carboxamide + L-glutamine = D-erythro-1-(imidazol-4-yl)glycerol 3-phosphate + 5-amino-1-(5-phospho-beta-D-ribosyl)imidazole-4-carboxamide + L-glutamate + H(+). Its pathway is amino-acid biosynthesis; L-histidine biosynthesis; L-histidine from 5-phospho-alpha-D-ribose 1-diphosphate: step 5/9. In terms of biological role, IGPS catalyzes the conversion of PRFAR and glutamine to IGP, AICAR and glutamate. The HisF subunit catalyzes the cyclization activity that produces IGP and AICAR from PRFAR using the ammonia provided by the HisH subunit. The sequence is that of Imidazole glycerol phosphate synthase subunit HisF from Desulfitobacterium hafniense (strain DSM 10664 / DCB-2).